Reading from the N-terminus, the 158-residue chain is Small ribosomal subunit protein uS9 (158 aa).

The protein belongs to the universal ribosomal protein uS9 family.

This Brucella anthropi (strain ATCC 49188 / DSM 6882 / CCUG 24695 / JCM 21032 / LMG 3331 / NBRC 15819 / NCTC 12168 / Alc 37) (Ochrobactrum anthropi) protein is Small ribosomal subunit protein uS9.